Here is a 396-residue protein sequence, read N- to C-terminus: MALRTIDALELAGKRVFIRVDFNVPLDPQGRVTDDARIRAALPTIRHAIQAKAKVILASHLGRPKGKPEDRQKLTLEPAAVRLSELLSQDVILADDCVGDGVKKLVRDLKDGHVLLLENLRFHPEEEKNDEAFARELASLADVWVNDAFGTAHRAHASTAGMARFVKEKAAGFLVQKEVEYLGKALGSPARPFVAIVGGAKVSDKIKVLENLIAKADAICVGGAMAYTFLKAQGVPVGKSLVEEDKLELARQILERAEARKVDLLLPVDHVCGAEPKETAERVVVNDRAIPDGLMGLDIGPKTLDRYRQRIAAAKTVFWNGPMGLFEQKPWSEGTFGVAKAMAASPAVTVVGGGDSAAAVEQAGLVDAMKHVSTGGGASLEFIEGRELPGVKACEE.

Substrate-binding positions include 21–23, R37, 60–63, R121, and R154; these read DFN and HLGR. ATP is bound by residues K205, G296, E327, and 353 to 356; that span reads GGDS.

The protein belongs to the phosphoglycerate kinase family. Monomer.

It localises to the cytoplasm. The enzyme catalyses (2R)-3-phosphoglycerate + ATP = (2R)-3-phospho-glyceroyl phosphate + ADP. It participates in carbohydrate degradation; glycolysis; pyruvate from D-glyceraldehyde 3-phosphate: step 2/5. This Anaeromyxobacter dehalogenans (strain 2CP-1 / ATCC BAA-258) protein is Phosphoglycerate kinase.